Here is a 358-residue protein sequence, read N- to C-terminus: uncharacterized protein (358 aa).

This is an uncharacterized protein from Klebsiella pneumoniae.